The sequence spans 1147 residues: Tip elongation aberrant protein 1 (1147 aa).

Residues Met-1–Thr-16 are compositionally biased toward basic residues. The interval Met-1 to Ser-64 is disordered. Residues Pro-18 to Leu-32 are compositionally biased toward polar residues. 6 Kelch repeats span residues Glu-94–Asn-144, Phe-146–Ser-198, Lys-199–Asp-253, Lys-254–Gly-303, Leu-305–Cys-351, and Thr-355–Thr-402. Disordered stretches follow at residues Ser-384–Gly-403 and Ser-408–Ser-547. Polar residues-rich tracts occupy residues Val-385 to Gly-403, Ser-408 to Leu-465, and Thr-472 to His-489. A compositionally biased stretch (low complexity) spans Ser-502–Gln-512. Position 503 is a phosphoserine (Ser-503). Residues Val-519–Ser-547 show a composition bias toward polar residues. An interaction with tea4 region spans residues Ser-538 to Asn-1147. Coiled-coil stretches lie at residues Lys-611–Val-649, Gln-716–Ala-838, Lys-879–Glu-990, and Ile-1084–Lys-1105. The tract at residues Lys-948 to Asn-1147 is retention at microtubule cell ends.

Major component of the tea1 cell-end complex. Interacts with rax2, tea4 and tip1. Interacts with for3 in the presence of tea4.

Its subcellular location is the cytoplasm. It localises to the cytoskeleton. Its function is as follows. Cell polarity protein. Acts as an end marker, directing the growth machinery to the cell poles. Involved in the regulation of microtubular organization, affecting the maintenance of a single central axis. Prevents the curling of microtubule tips around the cell ends and is required for the retention of polarity factors such as pom1, tip1 and tea2 at the cell ends, necessary for the cell to grow in a straight line. Links tip1 and tea4 in a common complex. The protein is Tip elongation aberrant protein 1 (tea1) of Schizosaccharomyces pombe (strain 972 / ATCC 24843) (Fission yeast).